A 111-amino-acid chain; its full sequence is Nucleoid-associated protein CT0805 (111 aa).

Belongs to the YbaB/EbfC family. In terms of assembly, homodimer.

Its subcellular location is the cytoplasm. The protein resides in the nucleoid. Its function is as follows. Binds to DNA and alters its conformation. May be involved in regulation of gene expression, nucleoid organization and DNA protection. This is Nucleoid-associated protein CT0805 from Chlorobaculum tepidum (strain ATCC 49652 / DSM 12025 / NBRC 103806 / TLS) (Chlorobium tepidum).